A 135-amino-acid polypeptide reads, in one-letter code: Mediator of RNA polymerase II transcription subunit 10 (135 aa).

The protein belongs to the Mediator complex subunit 10 family. As to quaternary structure, component of the Mediator complex.

Its subcellular location is the nucleus. Its function is as follows. Component of the Mediator complex, a coactivator involved in the regulated transcription of nearly all RNA polymerase II-dependent genes. Mediator functions as a bridge to convey information from gene-specific regulatory proteins to the basal RNA polymerase II transcription machinery. Mediator is recruited to promoters by direct interactions with regulatory proteins and serves as a scaffold for the assembly of a functional preinitiation complex with RNA polymerase II and the general transcription factors. The chain is Mediator of RNA polymerase II transcription subunit 10 (med10) from Xenopus laevis (African clawed frog).